A 329-amino-acid polypeptide reads, in one-letter code: L-arabinose-binding periplasmic protein (329 aa).

The first 23 residues, 1 to 23 (MHKFTKALAAIGLAAVMSQSAMA), serve as a signal peptide directing secretion.

The protein belongs to the bacterial solute-binding protein 2 family.

It localises to the periplasm. Functionally, involved in the high-affinity L-arabinose membrane transport system. Binds with high affinity to arabinose, but can also bind D-galactose (approximately 2-fold reduction) and D-fucose (approximately 40-fold reduction). This Escherichia coli (strain K12) protein is L-arabinose-binding periplasmic protein (araF).